Consider the following 287-residue polypeptide: MTEHTVSHANGSDLENAKKTYMLANNQKEIERMKNQHEWIKGSFGGLVKAPIDFDKKNQSILDSATADGTWLMDVRSLFPPETELIGFDIAPELYPPEGTRPRNVELVTADLLQGLPAQWIGRFDLVHQRFVFPNFETEVIREVLGRLMQCVKPGGWIQLVEPCAGENVSGPEPKWFLLLHKLANQFMRSAVPRDAILAILHEEGFVNINIESLDIVIGKHQRNKEMDARGRRSMRDSVSNMYPMITAEQLGMPKEEARAVLDKFEADMQKYRTAVRHVIIWAQRPE.

This sequence belongs to the methyltransferase superfamily. LaeA methyltransferase family.

The protein operates within mycotoxin biosynthesis. Its function is as follows. N-methyltransferase; part of the gene cluster that mediates the biosynthesis of 11'-deoxyverticillin A, one of the dimeric epipolythiodioxopiperazines (ETPs) from the verticillin family that act as mycotoxins. 11'-deoxyverticillin A is required for normal conidiation. The nonribosomal peptide synthetase verP is speculated to be responsible for condensation of amino acids to form the carbon skeleton of verticillin, whereas the cluster-specific tailoring enzymes are involved in further modifications leading to the production of 11'-deoxyverticillin A. This is N-methyltransferase verN from Clonostachys rogersoniana.